We begin with the raw amino-acid sequence, 252 residues long: Mediator of RNA polymerase II transcription subunit 20 (252 aa).

This sequence belongs to the Mediator complex subunit 20 family. In terms of assembly, component of the Mediator complex, which includes at least CDK8, MED4, MED6, MED11, MED14, MED17, MED18, MED20, MED21, MED22, MED27, MED28, MED30 and MED31.

The protein localises to the nucleus. Component of the Mediator complex, a coactivator involved in the regulated transcription of nearly all RNA polymerase II-dependent genes. Mediator functions as a bridge to convey information from gene-specific regulatory proteins to the basal RNA polymerase II transcription machinery. Mediator is recruited to promoters by direct interactions with regulatory proteins and serves as a scaffold for the assembly of a functional preinitiation complex with RNA polymerase II and the general transcription factors. Required for activated transcription of the MtnA gene. The chain is Mediator of RNA polymerase II transcription subunit 20 (MED20) from Drosophila melanogaster (Fruit fly).